Reading from the N-terminus, the 489-residue chain is MAKPTAPSTPRPWSGRFAGSLHPRIARFNASIGFDIRLLPYDVAGSLAHVQMLGACGILSREEAEQIRQGLEQIEKEVAEGIFQPDPEAEDVHYAVERRLVALVGEVGKKLHTGRSRNDQVATDLRLYLRDEIDTIRQALWELRGVLLDLASQHVETILPGYTHLQRAQPISLAHHLLAYEEMLWRDWQRLGRVREEVNVCPLGSGALAGTSLPIDRQLVAHLLGFERISANSLDAVSDRDYLVEFHAAASLILVHLSRLSEELILWATQEFGFVALTDACATGSSLMPQKKNPDVLELVRGKTGRVFGHLQALLVTLKGLPLAYNKDLQEDKEGLFDTVDTVKACLEAMTILLREGIQFQTQRMEAAVQEDFSNATDVADYLVRKGIPFRAAHDLVGQIVRTCVAEGILLKDLPLERWKSFHRAFEEDIFAAIDPRQVVAARLSAGGTGFAVVREALQRAQARYQQTEPAEEPPLPPSSPGSGLPLES.

The interval 462 to 489 (QARYQQTEPAEEPPLPPSSPGSGLPLES) is disordered.

It belongs to the lyase 1 family. Argininosuccinate lyase subfamily.

The protein resides in the cytoplasm. The enzyme catalyses 2-(N(omega)-L-arginino)succinate = fumarate + L-arginine. It functions in the pathway amino-acid biosynthesis; L-arginine biosynthesis; L-arginine from L-ornithine and carbamoyl phosphate: step 3/3. The polypeptide is Argininosuccinate lyase (Synechococcus sp. (strain JA-3-3Ab) (Cyanobacteria bacterium Yellowstone A-Prime)).